The primary structure comprises 388 residues: S-adenosylmethionine synthase (388 aa).

Position 16 (His16) interacts with ATP. Residue Asp18 participates in Mg(2+) binding. Glu44 lines the K(+) pocket. Positions 57 and 100 each coordinate L-methionine. The segment at 100 to 110 (QSPEIAQGVDR) is flexible loop. Residues 165 to 167 (DAK), Asp240, 246 to 247 (RK), Ala263, and Lys267 contribute to the ATP site. An L-methionine-binding site is contributed by Asp240. Lys271 provides a ligand contact to L-methionine.

Belongs to the AdoMet synthase family. As to quaternary structure, homotetramer; dimer of dimers. It depends on Mg(2+) as a cofactor. K(+) serves as cofactor.

Its subcellular location is the cytoplasm. It catalyses the reaction L-methionine + ATP + H2O = S-adenosyl-L-methionine + phosphate + diphosphate. Its pathway is amino-acid biosynthesis; S-adenosyl-L-methionine biosynthesis; S-adenosyl-L-methionine from L-methionine: step 1/1. Catalyzes the formation of S-adenosylmethionine (AdoMet) from methionine and ATP. The overall synthetic reaction is composed of two sequential steps, AdoMet formation and the subsequent tripolyphosphate hydrolysis which occurs prior to release of AdoMet from the enzyme. The chain is S-adenosylmethionine synthase from Acinetobacter baumannii (strain ACICU).